Here is a 110-residue protein sequence, read N- to C-terminus: Large ribosomal subunit protein P1 (110 aa).

Residues 87 to 110 are disordered; it reads PAAEEKKEEEKEESDEDMGFGLFD.

Belongs to the eukaryotic ribosomal protein P1/P2 family. In terms of assembly, P1 and P2 exist as dimers at the large ribosomal subunit. Post-translationally, phosphorylated.

Functionally, plays an important role in the elongation step of protein synthesis. This chain is Large ribosomal subunit protein P1 (ALTA12), found in Alternaria alternata (Alternaria rot fungus).